The sequence spans 119 residues: MTGTGKTVTRVDLCEAVYQKVGLSRTESSAFVELVLKEITDCLERGETVKLSSFGSFMVRKKGQRIGRNPKTGTEVPISPRRVMVFKPSAILKQRINGQQGSGKMNGEASHEQLSAEPE.

Residues 96–119 (INGQQGSGKMNGEASHEQLSAEPE) form a disordered region.

The protein belongs to the bacterial histone-like protein family. Heterodimer of an alpha and a beta chain.

Its function is as follows. This protein is one of the two subunits of integration host factor, a specific DNA-binding protein that functions in genetic recombination as well as in transcriptional and translational control. This chain is Integration host factor subunit alpha, found in Bradyrhizobium sp. (strain BTAi1 / ATCC BAA-1182).